A 77-amino-acid chain; its full sequence is Ribonuclease P protein component 1 (77 aa).

The protein belongs to the eukaryotic/archaeal RNase P protein component 1 family. In terms of assembly, consists of a catalytic RNA component and at least 4-5 protein subunits.

The protein localises to the cytoplasm. The enzyme catalyses Endonucleolytic cleavage of RNA, removing 5'-extranucleotides from tRNA precursor.. In terms of biological role, part of ribonuclease P, a protein complex that generates mature tRNA molecules by cleaving their 5'-ends. In Sulfurisphaera tokodaii (strain DSM 16993 / JCM 10545 / NBRC 100140 / 7) (Sulfolobus tokodaii), this protein is Ribonuclease P protein component 1.